The following is a 614-amino-acid chain: Deoxynucleoside triphosphate triphosphohydrolase SAMHD1 (614 aa).

A compositionally biased stretch (low complexity) spans 1–13 (MGSPAAGWGAAPA). Residues 1-33 (MGSPAAGWGAAPAKRARREGSAESSCGSPADRD) form a disordered region. In terms of domain architecture, SAM spans 37–102 (WDTERLCQHL…LACLNQLRQT (66 aa)). GTP-binding residues include K107 and V108. DGTP is bound at residue N110. GTP-binding residues include D128, Q133, and R136. Positions 140, 141, 147, and 155 each coordinate dGTP. Q140 lines the dATP pocket. Q140 lines the dCTP pocket. Q140 contributes to the dTTP binding site. R155 lines the dATP pocket. A dCTP-binding site is contributed by R155. R155 contributes to the dTTP binding site. The region spanning 155–307 (RFEHSLGVGY…GIDVDKWDYF (153 aa)) is the HD domain. 3 residues coordinate Mn(2+): H158, H197, and D198. Residues H201 and H206 each coordinate dATP. Residues H201 and H206 each coordinate dCTP. 2 residues coordinate dTTP: H201 and H206. H224 is an active-site residue. D302 lines the Mn(2+) pocket. DGTP is bound by residues K303, Y306, D310, R324, R343, K345, N349, R357, Y365, Q366, H367, and K368. DATP is bound by residues K303, Y306, and D310. DCTP is bound by residues K303, Y306, and D310. 3 residues coordinate dTTP: K303, Y306, and D310. A dATP-binding site is contributed by R357. R357 is a binding site for dCTP. Q366 contributes to the dATP binding site. Q366 contacts dCTP. Q366 contributes to the dTTP binding site. The GTP site is built by R442, K446, and K515. K515 lines the dGTP pocket.

This sequence belongs to the SAMHD1 family. Homodimer; in absence of GTP and dNTP. Homotetramer; in GTP- and dNTP-bound form. Interacts with rbbp8/CtIP. Requires Zn(2+) as cofactor.

The protein localises to the nucleus. Its subcellular location is the chromosome. It carries out the reaction a 2'-deoxyribonucleoside 5'-triphosphate + H2O = a 2'-deoxyribonucleoside + triphosphate + H(+). The catalysed reaction is dATP + H2O = 2'-deoxyadenosine + triphosphate + H(+). It catalyses the reaction dCTP + H2O = 2'-deoxycytidine + triphosphate + H(+). The enzyme catalyses dGTP + H2O = 2'-deoxyguanosine + triphosphate + H(+). It carries out the reaction dTTP + H2O = thymidine + triphosphate + H(+). With respect to regulation, allosterically activated and regulated via the combined actions of GTP and dNTPs (dATP, dGTP, dTTP and dCTP): Allosteric site 1 binds GTP, while allosteric site 2 binds dNTP. Allosteric activation promotes the formation of highly active homotetramers. Functionally, protein that acts both as a host restriction factor involved in defense response to virus and as a regulator of DNA end resection at stalled replication forks. Has deoxynucleoside triphosphate (dNTPase) activity, which is required to restrict infection by viruses: dNTPase activity reduces cellular dNTP levels to levels too low for retroviral reverse transcription to occur, blocking early-stage virus replication in dendritic and other myeloid cells. Functions during S phase at stalled DNA replication forks to promote the resection of gapped or reversed forks: acts by stimulating the exonuclease activity of MRE11, activating the ATR-CHK1 pathway and allowing the forks to restart replication. Its ability to promote degradation of nascent DNA at stalled replication forks is required to prevent induction of type I interferons, thereby preventing chronic inflammation. Ability to promote DNA end resection at stalled replication forks is independent of dNTPase activity. The polypeptide is Deoxynucleoside triphosphate triphosphohydrolase SAMHD1 (Gallus gallus (Chicken)).